Consider the following 370-residue polypeptide: Leucine-rich repeat and transmembrane domain-containing protein 2 (370 aa).

An N-terminal signal peptide occupies residues 1 to 35 (MLAPGSSPGQRGRLALQWRQVSWITCWIALYAVEA). Residues 36–68 (LPTCPFSCKCDSRSLEVDCSGLGLTTVPPDVPA) form the LRRNT domain. At 36 to 310 (LPTCPFSCKC…PASVRRAMGT (275 aa)) the chain is on the extracellular side. LRR repeat units follow at residues 69–90 (ATRTLLLLNNKLSALPSWAFAN), 93–114 (SLQRLDLSNNFLDRLPRSIFGD), 117–139 (NLTELQLRNNSIRTLDRDLLRHS), 141–162 (LLRHLDLSINGLAQLPPGLFDG), and 165–186 (ALRSLSLRSNRLQNLDRLTFEP). N90 carries N-linked (GlcNAc...) asparagine glycosylation. 2 N-linked (GlcNAc...) asparagine glycosylation sites follow: N117 and N125. Positions 198-252 (NPWECDCNLREFKHWMEWFSYRGGRLDQLACTLPKELRGKDMRMVPMEMFNYCSQ) constitute an LRRCT domain. N257 carries N-linked (GlcNAc...) asparagine glycosylation. The disordered stretch occupies residues 261–300 (GLDIPGPPCTKASPEPAKPKPGAEPEPEPSTACPQKQRHR). Residues 311–331 (VIIAGVVCGVVCIMMVVAAAY) form a helical membrane-spanning segment. Residues 332-370 (GCIYASLMAKYHRELKKRQPLMGDPEGEHEDQKQISSVA) lie on the Cytoplasmic side of the membrane. The segment at 351–370 (PLMGDPEGEHEDQKQISSVA) is disordered.

It is found in the membrane. The polypeptide is Leucine-rich repeat and transmembrane domain-containing protein 2 (LRTM2) (Homo sapiens (Human)).